The following is a 326-amino-acid chain: Deoxyuridine 5'-triphosphate nucleotidohydrolase (326 aa).

Substrate is bound by residues 218-220 (RSS) and 321-322 (FG).

It belongs to the dUTPase family. Mg(2+) serves as cofactor.

It catalyses the reaction dUTP + H2O = dUMP + diphosphate + H(+). Its function is as follows. Involved in nucleotide metabolism: produces dUMP, the immediate precursor of thymidine nucleotides and decreases the intracellular concentration of dUTP to avoid uracil incorporation into viral DNA. The sequence is that of Deoxyuridine 5'-triphosphate nucleotidohydrolase from Equus caballus (Horse).